A 491-amino-acid polypeptide reads, in one-letter code: MSNDPIDVVLIGGGIMSATLGAMIQRVQPGWSIRIYESLGEVAQESSNPWNNAGTGHAALCELNYMPEAEDGTVDPAKAISINEQFQLSRQFWASLVAAGDLPEPQTFINSTPHMTFVRGRENVRYLRRRYEELKDQPLFAGMEYSEDAETIAEWAPLLTKKRNRKQRIAATRQLAGTDVDFGALTRALVDDLVASGAELALNHRVCSLKRTKDGLWRIRARHEVGRTPREALARFVFVGAGGGALHLLQKSGISEIEGFGGFPISGQFLRTTNPAIVAQHKAKVYGKAAVGAPPMSVPHLDTRVVDGETSLLFGPYAGFSPKFLKTGTWWDLPGSIRLGNIGPMLAVARDNFDLMKYLIGELMAGREKKLAALREFMPTAKSEDWELIAAGQRVQVMKKDERKGGVLQFGTEVIAAADGSIAGLLGASPGASTAVPIMVDLLKRCFPERFEGWLPVLRELIPTVGTTLNDRPEEAEFVLKRTAAVLKLAQ.

The protein belongs to the MQO family. FAD is required as a cofactor.

It carries out the reaction (S)-malate + a quinone = a quinol + oxaloacetate. It functions in the pathway carbohydrate metabolism; tricarboxylic acid cycle; oxaloacetate from (S)-malate (quinone route): step 1/1. This Leifsonia xyli subsp. xyli (strain CTCB07) protein is Probable malate:quinone oxidoreductase.